Reading from the N-terminus, the 145-residue chain is MNRVVLIGRLTKDPELKFTPGTGTAVTTFVLAVDRRFSKDGKNEADFIPVVVWGKQAESTANYMSKGKLIGISGRIQTRSYEAKDGTRRYVTEVVADEVKFLEWGNKQSSGSQGFNNFESDPLSYNNEDNYNDDITPVDEGEVPF.

The SSB domain occupies 1–103 (MNRVVLIGRL…VVADEVKFLE (103 aa)). The segment covering 112–129 (SQGFNNFESDPLSYNNED) has biased composition (polar residues). Residues 112-145 (SQGFNNFESDPLSYNNEDNYNDDITPVDEGEVPF) are disordered. Acidic residues predominate over residues 130 to 145 (NYNDDITPVDEGEVPF).

As to quaternary structure, homotetramer.

This chain is Single-stranded DNA-binding protein (ssb), found in Clostridium tetani (strain Massachusetts / E88).